The primary structure comprises 482 residues: Auxin transporter-like protein 4 (482 aa).

The Cytoplasmic portion of the chain corresponds to 1 to 59 (MLSQNQAEEAIVTNMNETEQEGGSSLEEIAEDQSMFNFKSFLWHGGSVWDAWFSCASNQ). Residues 60 to 77 (VAQVLLTLPYSFSQLGMV) form a helical membrane-spanning segment. The Extracellular portion of the chain corresponds to 78-79 (SG). A helical membrane pass occupies residues 80–100 (IVFQIFYGLIGSWTAYLISVL). Topologically, residues 101 to 135 (YVEYRARKEKENVNFKNHVIQWFEVLDGLLGRYWK) are cytoplasmic. Residues 136–156 (ALGLAFNCTFLLFGSVIQLIA) form a helical membrane-spanning segment. At 157–172 (CASNIYYINDKLDKRT) the chain is on the extracellular side. Residues 173 to 193 (WTYIFGACCATTVFIPSFHNY) form a helical membrane-spanning segment. Residues 194 to 196 (RIW) lie on the Cytoplasmic side of the membrane. Residues 197–217 (SFLGLGMTTYTAWYMAIAAIV) form a helical membrane-spanning segment. Residues 218–232 (NGQIENVVHSGPTKL) lie on the Extracellular side of the membrane. The helical transmembrane segment at 233–253 (VLYFTGATNILYTFGGHAVTV) threads the bilayer. Residues 254-266 (EIMHAMWKPQKFK) lie on the Cytoplasmic side of the membrane. The chain crosses the membrane as a helical span at residues 267 to 287 (YIYFLATLYVFTLTIPSAVAV). Over 288–314 (YWAFGDELLNHSNAFSLLPKNGFRDAA) the chain is Extracellular. N-linked (GlcNAc...) asparagine glycosylation is present at asparagine 297. A helical membrane pass occupies residues 315–335 (VILMLIHQFITFGFACTPLYF). Residues 336–356 (VWEKVIGMHDTKSICLRALVR) lie on the Cytoplasmic side of the membrane. A helical membrane pass occupies residues 357-377 (LPVVIPIWFLAIIFPFFGPIN). Residue serine 378 is a topological domain, extracellular. The chain crosses the membrane as a helical span at residues 379–399 (AVGALLVTFTVYIIPALAHML). The Cytoplasmic segment spans residues 400 to 422 (TYRTASARKNAVEKPPSFLPSWT). A helical transmembrane segment spans residues 423-443 (AVYVLNAFIVVWVLVVGFGFG). The Extracellular segment spans residues 444 to 482 (GWASMTNFIRQIDTFGLFAKCYQCKPPTPPQAPSPHARH).

It belongs to the amino acid/polyamine transporter 2 family. Amino acid/auxin permease (AAAP) (TC 2.A.18.1) subfamily. As to expression, shoots and roots of nodulating plants, at low levels.

The protein localises to the cell membrane. Functionally, carrier protein involved in proton-driven auxin influx. Mediates the formation of auxin gradient from developing leaves (site of auxin biosynthesis) to tips by contributing to the loading of auxin in vascular tissues and facilitating acropetal (base to tip) auxin transport within inner tissues of the root apex, and basipetal (tip to base) auxin transport within outer tissues of the root apex. May be involved in lateral roots and nodules formation. This is Auxin transporter-like protein 4 (LAX4) from Medicago truncatula (Barrel medic).